Here is a 96-residue protein sequence, read N- to C-terminus: Co-chaperonin GroES (96 aa).

Belongs to the GroES chaperonin family. As to quaternary structure, heptamer of 7 subunits arranged in a ring. Interacts with the chaperonin GroEL.

The protein localises to the cytoplasm. In terms of biological role, together with the chaperonin GroEL, plays an essential role in assisting protein folding. The GroEL-GroES system forms a nano-cage that allows encapsulation of the non-native substrate proteins and provides a physical environment optimized to promote and accelerate protein folding. GroES binds to the apical surface of the GroEL ring, thereby capping the opening of the GroEL channel. The chain is Co-chaperonin GroES from Shewanella frigidimarina (strain NCIMB 400).